Reading from the N-terminus, the 539-residue chain is uncharacterized protein (539 aa).

An FAD-binding site is contributed by 6 to 20 (LIIGGGGAAARAAIE). Active-site residues include H227 and R243.

This sequence belongs to the FAD-dependent oxidoreductase 2 family. FRD/SDH subfamily. The cofactor is FAD.

This is an uncharacterized protein from Methanocaldococcus jannaschii (strain ATCC 43067 / DSM 2661 / JAL-1 / JCM 10045 / NBRC 100440) (Methanococcus jannaschii).